We begin with the raw amino-acid sequence, 586 residues long: uncharacterized protein (586 aa).

2 coiled-coil regions span residues 183–293 (THTE…ELEN) and 331–400 (FKDK…DKKN).

This is an uncharacterized protein from Bacillus subtilis (strain 168).